The chain runs to 161 residues: Phosphopantetheine adenylyltransferase (161 aa).

Ser9 contacts substrate. Residues 9-10 (SF) and His17 contribute to the ATP site. The substrate site is built by Lys41, Thr73, and Arg87. ATP contacts are provided by residues 88 to 90 (GIR), Glu98, and 123 to 129 (YQYVSSS).

Belongs to the bacterial CoaD family. Homohexamer. Requires Mg(2+) as cofactor.

It localises to the cytoplasm. It catalyses the reaction (R)-4'-phosphopantetheine + ATP + H(+) = 3'-dephospho-CoA + diphosphate. The protein operates within cofactor biosynthesis; coenzyme A biosynthesis; CoA from (R)-pantothenate: step 4/5. Functionally, reversibly transfers an adenylyl group from ATP to 4'-phosphopantetheine, yielding dephospho-CoA (dPCoA) and pyrophosphate. The protein is Phosphopantetheine adenylyltransferase of Levilactobacillus brevis (strain ATCC 367 / BCRC 12310 / CIP 105137 / JCM 1170 / LMG 11437 / NCIMB 947 / NCTC 947) (Lactobacillus brevis).